Consider the following 147-residue polypeptide: D-aminoacyl-tRNA deacylase (147 aa).

The short motif at 136–137 is the Gly-cisPro motif, important for rejection of L-amino acids element; it reads GP.

This sequence belongs to the DTD family. In terms of assembly, homodimer.

It localises to the cytoplasm. It catalyses the reaction glycyl-tRNA(Ala) + H2O = tRNA(Ala) + glycine + H(+). It carries out the reaction a D-aminoacyl-tRNA + H2O = a tRNA + a D-alpha-amino acid + H(+). An aminoacyl-tRNA editing enzyme that deacylates mischarged D-aminoacyl-tRNAs. Also deacylates mischarged glycyl-tRNA(Ala), protecting cells against glycine mischarging by AlaRS. Acts via tRNA-based rather than protein-based catalysis; rejects L-amino acids rather than detecting D-amino acids in the active site. By recycling D-aminoacyl-tRNA to D-amino acids and free tRNA molecules, this enzyme counteracts the toxicity associated with the formation of D-aminoacyl-tRNA entities in vivo and helps enforce protein L-homochirality. This Streptococcus sanguinis (strain SK36) protein is D-aminoacyl-tRNA deacylase.